A 652-amino-acid polypeptide reads, in one-letter code: Nucleolar GTP-binding protein 1 (652 aa).

Residues 169–341 (RTIIICGFPN…VKTEACERLL (173 aa)) form the OBG-type G domain. GTP-binding positions include 175–182 (GFPNVGKS), 221–225 (DTPGI), and 289–292 (NKID). Residues 501–521 (RLSSRKNKPVIPRNKQPKVRD) form a disordered region.

Belongs to the TRAFAC class OBG-HflX-like GTPase superfamily. OBG GTPase family. NOG subfamily.

It is found in the nucleus. The protein resides in the nucleolus. Functionally, involved in the biogenesis of the 60S ribosomal subunit. Required for normal assembly of the mitotic spindle. May be involved in both centrosome-dependent and centrosome-independent spindle assembly programs. Acts as a TP53 repressor, preventing TP53 stabilization and cell cycle arrest. The polypeptide is Nucleolar GTP-binding protein 1 (Drosophila melanogaster (Fruit fly)).